The sequence spans 395 residues: Putative pyridoxal phosphate-dependent acyltransferase (395 aa).

110–111 (GF) lines the pyridoxal 5'-phosphate pocket. Histidine 135 is a binding site for substrate. Residues serine 185, 210-213 (DDAH), and 240-243 (TLSK) contribute to the pyridoxal 5'-phosphate site. Position 243 is an N6-(pyridoxal phosphate)lysine (lysine 243). A substrate-binding site is contributed by threonine 357.

It belongs to the class-II pyridoxal-phosphate-dependent aminotransferase family. In terms of assembly, homodimer. Pyridoxal 5'-phosphate serves as cofactor.

This Staphylococcus aureus (strain COL) protein is Putative pyridoxal phosphate-dependent acyltransferase.